A 284-amino-acid polypeptide reads, in one-letter code: Dihydropteroate synthase (284 aa).

The Pterin-binding domain maps to 6–265 (VQVIGVLNVT…DVRASVDALK (260 aa)). Residue N13 participates in Mg(2+) binding. (7,8-dihydropterin-6-yl)methyl diphosphate is bound by residues T53, D86, N105, D177, K213, and 253-255 (RVH).

It belongs to the DHPS family. In terms of assembly, homodimer. It depends on Mg(2+) as a cofactor.

The enzyme catalyses (7,8-dihydropterin-6-yl)methyl diphosphate + 4-aminobenzoate = 7,8-dihydropteroate + diphosphate. The protein operates within cofactor biosynthesis; tetrahydrofolate biosynthesis; 7,8-dihydrofolate from 2-amino-4-hydroxy-6-hydroxymethyl-7,8-dihydropteridine diphosphate and 4-aminobenzoate: step 1/2. With respect to regulation, is potently inhibited by the sulfone dapsone and the two sulfonamides sulfamethoxazole and sulfamethoxypyridazine, with Kis in the range of 12 to 32 nM. To a lesser extent, is also inhibited by p-aminosalicylate (PAS). Its function is as follows. Catalyzes the condensation of para-aminobenzoate (pABA) with 6-hydroxymethyl-7,8-dihydropterin diphosphate (DHPt-PP) to form 7,8-dihydropteroate, the immediate precursor of folate derivatives. The polypeptide is Dihydropteroate synthase (folP1) (Mycobacterium leprae (strain TN)).